The sequence spans 144 residues: Aklanonic acid methyl ester cyclase AcmA (144 aa).

Substrate contacts are provided by Asn51 and Gln105.

The protein belongs to the polyketide cyclase DnrD family. In terms of assembly, homotetramer.

It carries out the reaction methyl aklanonate = aklaviketone. It participates in antibiotic biosynthesis; daunorubicin biosynthesis. Its pathway is antibiotic biosynthesis; carminomycin biosynthesis. It functions in the pathway antibiotic biosynthesis; rhodomycin biosynthesis. The protein operates within antibiotic biosynthesis; aclacinomycin biosynthesis. Its function is as follows. Involved in the biosynthesis of aklavinone which is an important precursor common to the formation of the clinically significant anthracyclines such as carminomycin, daunorubicin (daunomycin), rhodomycin, aclacinomycin T (aklavin) and aclacinomycin A (aclarubicin). These compounds are aromatic polyketide antibiotics that exhibit high cytotoxicity and are widely applied in the chemotherapy of a variety of cancers. Catalyzes the cyclization of aklanonic acid methyl ester to yield aklaviketone. It is also able to use nogalonic acid methyl ester as substrate, but produces exclusively auraviketone with C9-R stereochemistry. The protein is Aklanonic acid methyl ester cyclase AcmA (acma) of Streptomyces galilaeus.